The chain runs to 428 residues: Histone deacetylase 3 (428 aa).

The interval 3 to 316 (KTVAYFYDPD…WTYETSLLVE (314 aa)) is histone deacetylase. 1D-myo-inositol 1,4,5,6-tetrakisphosphate-binding residues include His17, Gly21, and Lys25. His135 is an active-site residue. 3 residues coordinate Zn(2+): Asp170, His172, and Asp259. Residue Arg265 participates in 1D-myo-inositol 1,4,5,6-tetrakisphosphate binding. 2 stretches are compositionally biased toward basic and acidic residues: residues 388-405 (DRTD…ENYS) and 415-428 (DGDH…DVEI). The disordered stretch occupies residues 388-428 (DRTDEADAEERGPEENYSRPEAPNEFYDGDHDNDKESDVEI). At Ser424 the chain carries Phosphoserine.

The protein belongs to the histone deacetylase family. HD type 1 subfamily. Interacts with HDAC7 and HDAC9. Interacts with DAXX, KDM4A, HDAC10 and DACH1. Found in a complex with NCOR1 and NCOR2. Component of the N-Cor repressor complex, at least composed of NCOR1, NCOR2, HDAC3, TBL1X, TBL1R, CORO2A and GPS2. Interacts with BCOR, MJD2A/JHDM3A, NRIP1, PRDM6 and SRY. Interacts with BTBD14B. Interacts with GLIS2. Interacts (via the DNA-binding domain) with NR2C1; the interaction recruits phosphorylated NR2C1 to PML bodies for sumoylation. Component of the Notch corepressor complex. Interacts with CBFA2T3 and NKAP. Interacts with APEX1; the interaction is not dependent on the acetylated status of APEX1. Interacts with ZMYND15. Interacts with SMRT/NCOR2 and BCL6 on DNA enhancer elements. Interacts with INSM1. Interacts with XBP1 isoform 1; the interaction occurs in endothelial cell (EC) under disturbed flow. Interacts (via C-terminus) with CCAR2 (via N-terminus). Interacts with and deacetylates MEF2D. Interacts with BEND3. Interacts with NKAPL. Interacts with DHX36; this interaction occurs in a RNA-dependent manner. Interacts weakly with CRY1; this interaction is enhanced in the presence of FBXL3. Interacts with FBXL3 and BMAL1. Interacts with NCOR1. Interacts with RARA. Interacts with SETD5. In terms of processing, sumoylated in vitro. Post-translationally, deubiquitinated on 'Lys-63'-linked ubiquitin chains by USP38; leading to a decreased level of histone acetylation.

It localises to the nucleus. Its subcellular location is the chromosome. It is found in the cytoplasm. The protein localises to the cytosol. The enzyme catalyses N(6)-acetyl-L-lysyl-[histone] + H2O = L-lysyl-[histone] + acetate. The catalysed reaction is N(6)-acetyl-L-lysyl-[protein] + H2O = L-lysyl-[protein] + acetate. It carries out the reaction N(6)-(2E)-butenoyl-L-lysyl-[protein] + H2O = (2E)-2-butenoate + L-lysyl-[protein]. It catalyses the reaction N(6)-(2-hydroxyisobutanoyl)-L-lysyl-[protein] + H2O = 2-hydroxy-2-methylpropanoate + L-lysyl-[protein]. The enzyme catalyses N(6)-[(S)-lactoyl]-L-lysyl-[protein] + H2O = (S)-lactate + L-lysyl-[protein]. Inositol tetraphosphate (1D-myo-inositol 1,4,5,6-tetrakisphosphate) promotes the histone deacetylase activity by acting as an intermolecular glue between HDAC3 and NCOR2, thereby promoting its association with the N-Cor complex, a prerequisite for the histone deacetylase activity. In terms of biological role, histone deacetylase that catalyzes the deacetylation of lysine residues on the N-terminal part of the core histones (H2A, H2B, H3 and H4), and some other non-histone substrates. Histone deacetylation gives a tag for epigenetic repression and plays an important role in transcriptional regulation, cell cycle progression and developmental events. Histone deacetylases act via the formation of large multiprotein complexes, such as N-Cor repressor complex, which activate the histone deacetylase activity. Participates in the BCL6 transcriptional repressor activity by deacetylating the H3 'Lys-27' (H3K27) on enhancer elements, antagonizing EP300 acetyltransferase activity and repressing proximal gene expression. Acts as a molecular chaperone for shuttling phosphorylated NR2C1 to PML bodies for sumoylation. Contributes, together with XBP1 isoform 1, to the activation of NFE2L2-mediated HMOX1 transcription factor gene expression in a PI(3)K/mTORC2/Akt-dependent signaling pathway leading to endothelial cell (EC) survival under disturbed flow/oxidative stress. Regulates both the transcriptional activation and repression phases of the circadian clock in a deacetylase activity-independent manner. During the activation phase, promotes the accumulation of ubiquitinated BMAL1 at the E-boxes and during the repression phase, blocks FBXL3-mediated CRY1/2 ubiquitination and promotes the interaction of CRY1 and BMAL1. The NCOR1-HDAC3 complex regulates the circadian expression of the core clock gene BMAL1 and the genes involved in lipid metabolism in the liver. Also functions as deacetylase for non-histone targets, such as KAT5, MEF2D, MAPK14, RARA and STAT3. Serves as a corepressor of RARA, mediating its deacetylation and repression, leading to inhibition of RARE DNA element binding. In addition to protein deacetylase activity, also acts as a protein-lysine deacylase by recognizing other acyl groups: catalyzes removal of (2E)-butenoyl (crotonyl), lactoyl (lactyl) and 2-hydroxyisobutanoyl (2-hydroxyisobutyryl) acyl groups from lysine residues, leading to protein decrotonylation, delactylation and de-2-hydroxyisobutyrylation, respectively. Catalyzes decrotonylation of MAPRE1/EB1. Mediates delactylation NBN/NBS1, thereby inhibiting DNA double-strand breaks (DSBs) via homologous recombination (HR). This is Histone deacetylase 3 from Mus musculus (Mouse).